Consider the following 532-residue polypeptide: Fatty aldehyde dehydrogenase HFD1 (532 aa).

Phosphoserine is present on serine 111. A helical transmembrane segment spans residues 134–152 (IIAPFNFPLLLAFAPLAAA). 214 to 219 (GSPRVG) is an NAD(+) binding site. Residues glutamate 236 and cysteine 273 contribute to the active site.

Belongs to the aldehyde dehydrogenase family.

It localises to the lipid droplet. It is found in the mitochondrion outer membrane. The protein localises to the endosome membrane. Its subcellular location is the cytoplasmic granule membrane. It carries out the reaction an aldehyde + NAD(+) + H2O = a carboxylate + NADH + 2 H(+). The catalysed reaction is hexadecanoate + NADH + 2 H(+) = hexadecanal + NAD(+) + H2O. The enzyme catalyses 4-hydroxybenzaldehyde + NAD(+) + H2O = 4-hydroxybenzoate + NADH + 2 H(+). Its function is as follows. Catalyzes the oxidation of long-chain aliphatic aldehydes to fatty acids. Responsible for conversion of the sphingosine 1-phosphate (S1P) degradation product hexadecenal to hexadecenoic acid. Involved in coenzyme Q (CoQ) biosynthesis, catalyzing the last step in the tyrosine to 4-hydroxybenzoate (4-HB) pathway. Oxidizes 4-hydroxybenzaldehyde (4-Hbz) to 4-HB, the aromatic precursor for coenzyme Q. This Saccharomyces cerevisiae (strain ATCC 204508 / S288c) (Baker's yeast) protein is Fatty aldehyde dehydrogenase HFD1 (HFD1).